Consider the following 364-residue polypeptide: Probable dual-specificity RNA methyltransferase RlmN (364 aa).

E106 acts as the Proton acceptor in catalysis. In terms of domain architecture, Radical SAM core spans 112–350; it reads YPQRNTVCIS…SCTVRDTRGR (239 aa). A disulfide bridge links C119 with C356. C126, C130, and C133 together coordinate [4Fe-4S] cluster. S-adenosyl-L-methionine-binding positions include 177–178, S211, 234–236, and N313; these read GE and SLH. The active-site S-methylcysteine intermediate is C356.

The protein belongs to the radical SAM superfamily. RlmN family. Requires [4Fe-4S] cluster as cofactor.

The protein resides in the cytoplasm. The enzyme catalyses adenosine(2503) in 23S rRNA + 2 reduced [2Fe-2S]-[ferredoxin] + 2 S-adenosyl-L-methionine = 2-methyladenosine(2503) in 23S rRNA + 5'-deoxyadenosine + L-methionine + 2 oxidized [2Fe-2S]-[ferredoxin] + S-adenosyl-L-homocysteine. It carries out the reaction adenosine(37) in tRNA + 2 reduced [2Fe-2S]-[ferredoxin] + 2 S-adenosyl-L-methionine = 2-methyladenosine(37) in tRNA + 5'-deoxyadenosine + L-methionine + 2 oxidized [2Fe-2S]-[ferredoxin] + S-adenosyl-L-homocysteine. In terms of biological role, specifically methylates position 2 of adenine 2503 in 23S rRNA and position 2 of adenine 37 in tRNAs. The protein is Probable dual-specificity RNA methyltransferase RlmN of Mycobacterium marinum (strain ATCC BAA-535 / M).